The sequence spans 163 residues: Nucleotide-binding protein Dvul_1191 (163 aa).

The protein belongs to the YajQ family.

Functionally, nucleotide-binding protein. The sequence is that of Nucleotide-binding protein Dvul_1191 from Nitratidesulfovibrio vulgaris (strain DP4) (Desulfovibrio vulgaris).